The primary structure comprises 82 residues: Cytochrome b-c1 complex subunit 8 (82 aa).

Residues 2–39 lie on the Mitochondrial matrix side of the membrane; it reads GRQFGHLTRVRHVITYSLSPFEQRAFPHYFSKGIPNVL. Lys33 is subject to N6-acetyllysine; alternate. N6-succinyllysine; alternate is present on Lys33. Residues 40-68 form a helical membrane-spanning segment; that stretch reads RRTRACILRVAPPFVAFYLVYTWGTQEFE. At 69–82 the chain is on the mitochondrial intermembrane side; sequence KSKRKNPAAYENDR.

Belongs to the UQCRQ/QCR8 family. Component of the ubiquinol-cytochrome c oxidoreductase (cytochrome b-c1 complex, complex III, CIII), a multisubunit enzyme composed of 11 subunits. The complex is composed of 3 respiratory subunits cytochrome b, cytochrome c1 and Rieske protein UQCRFS1, 2 core protein subunits UQCRC1/QCR1 and UQCRC2/QCR2, and 6 low-molecular weight protein subunits UQCRH/QCR6, UQCRB/QCR7, UQCRQ/QCR8, UQCR10/QCR9, UQCR11/QCR10 and subunit 9, the cleavage product of Rieske protein UQCRFS1. The complex exists as an obligatory dimer and forms supercomplexes (SCs) in the inner mitochondrial membrane with NADH-ubiquinone oxidoreductase (complex I, CI) and cytochrome c oxidase (complex IV, CIV), resulting in different assemblies (supercomplex SCI(1)III(2)IV(1) and megacomplex MCI(2)III(2)IV(2)). Interacts with UQCC6.

It is found in the mitochondrion inner membrane. Its function is as follows. Component of the ubiquinol-cytochrome c oxidoreductase, a multisubunit transmembrane complex that is part of the mitochondrial electron transport chain which drives oxidative phosphorylation. The respiratory chain contains 3 multisubunit complexes succinate dehydrogenase (complex II, CII), ubiquinol-cytochrome c oxidoreductase (cytochrome b-c1 complex, complex III, CIII) and cytochrome c oxidase (complex IV, CIV), that cooperate to transfer electrons derived from NADH and succinate to molecular oxygen, creating an electrochemical gradient over the inner membrane that drives transmembrane transport and the ATP synthase. The cytochrome b-c1 complex catalyzes electron transfer from ubiquinol to cytochrome c, linking this redox reaction to translocation of protons across the mitochondrial inner membrane, with protons being carried across the membrane as hydrogens on the quinol. In the process called Q cycle, 2 protons are consumed from the matrix, 4 protons are released into the intermembrane space and 2 electrons are passed to cytochrome c. This chain is Cytochrome b-c1 complex subunit 8 (UQCRQ), found in Bos taurus (Bovine).